Reading from the N-terminus, the 473-residue chain is Photosystem II CP43 reaction center protein (473 aa).

The propeptide occupies 1–14 (MKTLYSLRRFYHVE). Residue T15 is modified to N-acetylthreonine. At T15 the chain carries Phosphothreonine. A run of 5 helical transmembrane segments spans residues 69–93 (LFEV…PHLA), 134–155 (LLGP…KDRN), 178–200 (KALY…RKIT), 255–275 (KPFA…LSYS), and 291–312 (WFNN…ASQA). [CaMn4O5] cluster is bound at residue E367. A helical transmembrane segment spans residues 447-471 (RARAAAAGFEKGIDRDFEPVLSMTP).

It belongs to the PsbB/PsbC family. PsbC subfamily. As to quaternary structure, PSII is composed of 1 copy each of membrane proteins PsbA, PsbB, PsbC, PsbD, PsbE, PsbF, PsbH, PsbI, PsbJ, PsbK, PsbL, PsbM, PsbT, PsbX, PsbY, PsbZ, Psb30/Ycf12, at least 3 peripheral proteins of the oxygen-evolving complex and a large number of cofactors. It forms dimeric complexes. Requires Binds multiple chlorophylls and provides some of the ligands for the Ca-4Mn-5O cluster of the oxygen-evolving complex. It may also provide a ligand for a Cl- that is required for oxygen evolution. PSII binds additional chlorophylls, carotenoids and specific lipids. as cofactor.

The protein localises to the plastid. Its subcellular location is the chloroplast thylakoid membrane. In terms of biological role, one of the components of the core complex of photosystem II (PSII). It binds chlorophyll and helps catalyze the primary light-induced photochemical processes of PSII. PSII is a light-driven water:plastoquinone oxidoreductase, using light energy to abstract electrons from H(2)O, generating O(2) and a proton gradient subsequently used for ATP formation. This is Photosystem II CP43 reaction center protein from Ipomoea purpurea (Common morning glory).